The following is a 528-amino-acid chain: MALKWTTVLLIQLSFYFSSGSCGKVLVWAAEYSLWMNMKTILKELVQRGHEVTVLASSASILFDPNDSSTLKLEVYPTSLTKTEFENIIMQLVKRLSEIQKDTFWLPFSQEQEILWAINDIIRNFCKDVVSNKKLMKKLQESRFDIVFADAYLPCGELLAELFNIPFVYSHSFSPGYSFERHSGGFIFPPSYVPVVMSKLSDQMTFMERVKNMLYVLYFDFWFQIFNMKKWDQFYSEVLGRPTTLSETMRKADIWLMRNSWNFKFPHPFLPNVDFVGGLHCKPAKPLPKEMEEFVQSSGENGVVVFSLGSMVSNMTEERANVIATALAKIPQKVLWRFDGNKPDALGLNTRLYKWIPQNDLLGHPKTRAFITHGGANGIYEAIYHGIPMVGIPLFFDQPDNIAHMKAKGAAVRVDFNTMSSTDLLNALKTVINDPSYKENIMKLSRIQHDQPVKPLDRAVFWIEFVMRHKGAKHLRVAAHNLTWFQYHSLDVIGFLLACVATVLFIITKCCLFCFWKFARKGKKGKRD.

An N-terminal signal peptide occupies residues 1–23; it reads MALKWTTVLLIQLSFYFSSGSCG. Asn66 carries N-linked (GlcNAc...) asparagine glycosylation. Lys134 is modified (N6-succinyllysine). N-linked (GlcNAc...) asparagine glycans are attached at residues Asn314 and Asn481. The chain crosses the membrane as a helical span at residues 492–512; it reads VIGFLLACVATVLFIITKCCL.

This sequence belongs to the UDP-glycosyltransferase family.

The protein localises to the microsome membrane. Its subcellular location is the endoplasmic reticulum membrane. The enzyme catalyses glucuronate acceptor + UDP-alpha-D-glucuronate = acceptor beta-D-glucuronoside + UDP + H(+). UDPGT is of major importance in the conjugation and subsequent elimination of potentially toxic xenobiotics and endogenous compounds. In Homo sapiens (Human), this protein is UDP-glucuronosyltransferase 2B10 (UGT2B10).